We begin with the raw amino-acid sequence, 295 residues long: ATP synthase gamma chain (295 aa).

Belongs to the ATPase gamma chain family. In terms of assembly, F-type ATPases have 2 components, CF(1) - the catalytic core - and CF(0) - the membrane proton channel. CF(1) has five subunits: alpha(3), beta(3), gamma(1), delta(1), epsilon(1). CF(0) has three main subunits: a, b and c.

It is found in the cell membrane. In terms of biological role, produces ATP from ADP in the presence of a proton gradient across the membrane. The gamma chain is believed to be important in regulating ATPase activity and the flow of protons through the CF(0) complex. The protein is ATP synthase gamma chain of Caldanaerobacter subterraneus subsp. tengcongensis (strain DSM 15242 / JCM 11007 / NBRC 100824 / MB4) (Thermoanaerobacter tengcongensis).